We begin with the raw amino-acid sequence, 81 residues long: Putative snRNP Sm-like protein (81 aa).

In terms of domain architecture, Sm spans 13–81 (RPLDALGNSL…RGDNIVYISP (69 aa)).

Belongs to the snRNP Sm proteins family.

The sequence is that of Putative snRNP Sm-like protein from Methanothermobacter thermautotrophicus (strain ATCC 29096 / DSM 1053 / JCM 10044 / NBRC 100330 / Delta H) (Methanobacterium thermoautotrophicum).